The sequence spans 292 residues: NAC domain-containing protein 105 (292 aa).

One can recognise an NAC domain in the interval 12–162; sequence IPPGFRFHPT…GWVVCRAFKK (151 aa). The DNA-binding element occupies 112–168; that stretch reads IGMRKTLVFYRGRAPNGQKSDWIIHEYYSLESHQNSPPQEEGWVVCRAFKKRTTIPT. Residues 237 to 259 show a composition bias toward polar residues; sequence LPQLESPSLPSEITPHSTTFSEN. Residues 237–269 form a disordered region; it reads LPQLESPSLPSEITPHSTTFSENSSRKDDMSSE. Residues 260–269 show a composition bias toward basic and acidic residues; it reads SSRKDDMSSE.

Belongs to the plant vascular related NAC-domain protein family. In terms of assembly, interacts with NAC030/VND7. Detected in root protoxylem and metaxylem poles and in vessels of protoxylems, outermost metaxylems, inner metaxylems, shoots and hypocotyls. Expressed in roots, hypocotyls, cotyledons and leaves. Present in developing xylems. Present in root developing xylems. Specifically expressed in vessels but not in interfascicular fibers in stems.

The protein localises to the nucleus. Functionally, transcription activator that binds to the secondary wall NAC binding element (SNBE), 5'-(T/A)NN(C/T)(T/C/G)TNNNNNNNA(A/C)GN(A/C/T)(A/T)-3', in the promoter of target genes. Involved in xylem formation by promoting the expression of secondary wall-associated transcription factors and of genes involved in secondary wall biosynthesis and programmed cell death, genes driven by the secondary wall NAC binding element (SNBE). Triggers thickening of secondary walls. This Arabidopsis thaliana (Mouse-ear cress) protein is NAC domain-containing protein 105.